The chain runs to 547 residues: Methionine--tRNA ligase (547 aa).

Residues 15–25 (PYANGSLHLGH) carry the 'HIGH' region motif. Positions 146, 149, 159, and 162 each coordinate Zn(2+). The short motif at 332–336 (KMSKS) is the 'KMSKS' region element. Residue Lys-335 participates in ATP binding.

The protein belongs to the class-I aminoacyl-tRNA synthetase family. MetG type 1 subfamily. Monomer. Requires Zn(2+) as cofactor.

The protein localises to the cytoplasm. The catalysed reaction is tRNA(Met) + L-methionine + ATP = L-methionyl-tRNA(Met) + AMP + diphosphate. Its function is as follows. Is required not only for elongation of protein synthesis but also for the initiation of all mRNA translation through initiator tRNA(fMet) aminoacylation. In Baumannia cicadellinicola subsp. Homalodisca coagulata, this protein is Methionine--tRNA ligase.